The sequence spans 140 residues: Nucleoside diphosphate kinase (140 aa).

ATP-binding residues include Lys-11, Phe-59, Arg-87, Thr-93, Arg-104, and Asn-114. The active-site Pros-phosphohistidine intermediate is the His-117.

This sequence belongs to the NDK family. Homotetramer. Mg(2+) serves as cofactor.

It localises to the cytoplasm. The enzyme catalyses a 2'-deoxyribonucleoside 5'-diphosphate + ATP = a 2'-deoxyribonucleoside 5'-triphosphate + ADP. The catalysed reaction is a ribonucleoside 5'-diphosphate + ATP = a ribonucleoside 5'-triphosphate + ADP. Functionally, major role in the synthesis of nucleoside triphosphates other than ATP. The ATP gamma phosphate is transferred to the NDP beta phosphate via a ping-pong mechanism, using a phosphorylated active-site intermediate. The protein is Nucleoside diphosphate kinase of Rickettsia bellii (strain OSU 85-389).